A 324-amino-acid polypeptide reads, in one-letter code: Malate dehydrogenase (324 aa).

NAD(+) is bound by residues 7-13 (GAAGGIG) and aspartate 34. Substrate contacts are provided by arginine 88 and arginine 94. NAD(+) is bound by residues asparagine 101 and 124-126 (VTN). Substrate-binding residues include asparagine 126 and arginine 160. Histidine 184 serves as the catalytic Proton acceptor. NAD(+) is bound at residue methionine 238.

It belongs to the LDH/MDH superfamily. MDH type 1 family. In terms of assembly, homodimer.

The enzyme catalyses (S)-malate + NAD(+) = oxaloacetate + NADH + H(+). Its function is as follows. Catalyzes the reversible oxidation of malate to oxaloacetate. This is Malate dehydrogenase from Haemophilus ducreyi (strain 35000HP / ATCC 700724).